A 545-amino-acid chain; its full sequence is Probable bifunctional tRNA threonylcarbamoyladenosine biosynthesis protein (545 aa).

The segment at 1 to 329 (MKNTFILGIE…YRTDDVKVTW (329 aa)) is kae1. 3 residues coordinate Fe cation: His-113, His-117, and Tyr-134. Residues 134–138 (YVSGA), Asp-166, Gly-179, Glu-183, and Asn-262 each bind L-threonylcarbamoyladenylate. Residue Asp-290 participates in Fe cation binding. The Protein kinase domain occupies 340–545 (EISPGTSLKL…EEIKKRARYA (206 aa)). ATP contacts are provided by residues 353–361 (LDNGAEAIV) and Lys-375. Asp-462 serves as the catalytic Proton acceptor; for kinase activity.

This sequence in the N-terminal section; belongs to the KAE1 / TsaD family. The protein in the C-terminal section; belongs to the protein kinase superfamily. Tyr protein kinase family. BUD32 subfamily. Component of the KEOPS complex that consists of Kae1, Bud32, Cgi121 and Pcc1; the whole complex dimerizes. Fe(2+) serves as cofactor.

It is found in the cytoplasm. It catalyses the reaction L-seryl-[protein] + ATP = O-phospho-L-seryl-[protein] + ADP + H(+). It carries out the reaction L-threonyl-[protein] + ATP = O-phospho-L-threonyl-[protein] + ADP + H(+). The enzyme catalyses L-threonylcarbamoyladenylate + adenosine(37) in tRNA = N(6)-L-threonylcarbamoyladenosine(37) in tRNA + AMP + H(+). In terms of biological role, required for the formation of a threonylcarbamoyl group on adenosine at position 37 (t(6)A37) in tRNAs that read codons beginning with adenine. Is a component of the KEOPS complex that is probably involved in the transfer of the threonylcarbamoyl moiety of threonylcarbamoyl-AMP (TC-AMP) to the N6 group of A37. The Kae1 domain likely plays a direct catalytic role in this reaction. The Bud32 domain probably displays kinase activity that regulates Kae1 function. This chain is Probable bifunctional tRNA threonylcarbamoyladenosine biosynthesis protein, found in Methanosarcina barkeri (strain Fusaro / DSM 804).